A 143-amino-acid chain; its full sequence is Large ribosomal subunit protein uL11 (143 aa).

Belongs to the universal ribosomal protein uL11 family. In terms of assembly, part of the ribosomal stalk of the 50S ribosomal subunit. Interacts with L10 and the large rRNA to form the base of the stalk. L10 forms an elongated spine to which L12 dimers bind in a sequential fashion forming a multimeric L10(L12)X complex. In terms of processing, one or more lysine residues are methylated.

In terms of biological role, forms part of the ribosomal stalk which helps the ribosome interact with GTP-bound translation factors. This is Large ribosomal subunit protein uL11 from Aromatoleum aromaticum (strain DSM 19018 / LMG 30748 / EbN1) (Azoarcus sp. (strain EbN1)).